Consider the following 204-residue polypeptide: Crossover junction endodeoxyribonuclease RuvC (204 aa).

Catalysis depends on residues Asp7, Glu68, and Asp141. Mg(2+)-binding residues include Asp7, Glu68, and Asp141.

It belongs to the RuvC family. Homodimer which binds Holliday junction (HJ) DNA. The HJ becomes 2-fold symmetrical on binding to RuvC with unstacked arms; it has a different conformation from HJ DNA in complex with RuvA. In the full resolvosome a probable DNA-RuvA(4)-RuvB(12)-RuvC(2) complex forms which resolves the HJ. The cofactor is Mg(2+).

It localises to the cytoplasm. It catalyses the reaction Endonucleolytic cleavage at a junction such as a reciprocal single-stranded crossover between two homologous DNA duplexes (Holliday junction).. Its function is as follows. The RuvA-RuvB-RuvC complex processes Holliday junction (HJ) DNA during genetic recombination and DNA repair. Endonuclease that resolves HJ intermediates. Cleaves cruciform DNA by making single-stranded nicks across the HJ at symmetrical positions within the homologous arms, yielding a 5'-phosphate and a 3'-hydroxyl group; requires a central core of homology in the junction. The consensus cleavage sequence is 5'-(A/T)TT(C/G)-3'. Cleavage occurs on the 3'-side of the TT dinucleotide at the point of strand exchange. HJ branch migration catalyzed by RuvA-RuvB allows RuvC to scan DNA until it finds its consensus sequence, where it cleaves and resolves the cruciform DNA. The chain is Crossover junction endodeoxyribonuclease RuvC from Clavibacter sepedonicus (Clavibacter michiganensis subsp. sepedonicus).